We begin with the raw amino-acid sequence, 782 residues long: Cyclic nucleotide-gated channel beta-3 (782 aa).

2 disordered regions span residues 1 to 111 (MFKS…PKSK) and 147 to 168 (GDIS…PSTQ). The Cytoplasmic segment spans residues 1–213 (MFKSLTIKSN…SIDSYTDRLY (213 aa)). Basic and acidic residues-rich tracts occupy residues 13–25 (KPRE…KQDP) and 57–73 (EESH…KNSL). Polar residues-rich tracts occupy residues 74 to 83 (RDLTTNPNHQ) and 152 to 168 (PEAS…PSTQ). Residues 214–237 (LLWLLLVTIAYNWNCWLIPLRLVF) traverse the membrane as a helical segment. Residues 238–244 (PYQTPDN) lie on the Extracellular side of the membrane. A helical membrane pass occupies residues 245 to 265 (THYWFITDITCDIIYLCDMLL). The Cytoplasmic portion of the chain corresponds to 266–294 (IQPRLQFIKGGDIMVDSNELKRHYRSSTK). A helical membrane pass occupies residues 295–312 (FQLDVASVMPFDVFYLFF). Residues 313–315 (GFN) are Extracellular-facing. The helical transmembrane segment at 316-330 (PVFRMNRILKYTSFF) threads the bilayer. Residues 331 to 343 (EFNHHLESIMDKA) are Cytoplasmic-facing. Positions 343 to 442 (AYIYRVIRTT…IGQMQDVIGA (100 aa)) are ion conduction pathway. Residues 344–366 (YIYRVIRTTGYLLYTLHINACIY) form a helical membrane-spanning segment. Residues 367–388 (YWASDYEGIGSTKWVYNGEGNK) are Extracellular-facing. Helical transmembrane passes span 389–415 (YLRC…SFEI) and 416–440 (VFQL…QDVI). The segment at 402–405 (TIGG) is selectivity filter. Topologically, residues 441–782 (GAATANQNNF…TIEVKEKAKQ (342 aa)) are cytoplasmic. Positions 445-521 (ANQNNFRISM…SIISKVELFK (77 aa)) are C-linker. Residues 525-641 (TQMIYDMLLR…LLMKKASVLL (117 aa)) are cyclic nucleotide-binding domain. 3',5'-cyclic GMP contacts are provided by G586, E587, R599, and T600. Residues 692–724 (EQTIQKTSENSEEGGGKRREYEDKEREPSEKIL) are disordered. The segment covering 705-724 (GGGKRREYEDKEREPSEKIL) has biased composition (basic and acidic residues).

Belongs to the cyclic nucleotide-gated cation channel (TC 1.A.1.5) family. CNGB3 subfamily. As to quaternary structure, forms heterotetrameric channels composed of CNGA3 and CNGB3 subunits with 3:1 stoichiometry.

It is found in the cell membrane. The enzyme catalyses Ca(2+)(in) = Ca(2+)(out). The catalysed reaction is Na(+)(in) = Na(+)(out). It catalyses the reaction K(+)(in) = K(+)(out). It carries out the reaction NH4(+)(in) = NH4(+)(out). The enzyme catalyses Rb(+)(in) = Rb(+)(out). The catalysed reaction is Li(+)(in) = Li(+)(out). It catalyses the reaction Cs(+)(in) = Cs(+)(out). Pore-forming subunit of the cone cyclic nucleotide-gated channel. Mediates cone photoresponses at bright light converting transient changes in intracellular cGMP levels into electrical signals. In the dark, cGMP levels are high and keep the channel open enabling a steady inward current carried by Na(+) and Ca(2+) ions that leads to membrane depolarization and neurotransmitter release from synaptic terminals. Upon photon absorption cGMP levels decline leading to channel closure and membrane hyperpolarization that ultimately slows neurotransmitter release and signals the presence of light, the end point of the phototransduction cascade. Conducts cGMP- and cAMP-gated ion currents, with permeability for monovalent and divalent cations. The sequence is that of Cyclic nucleotide-gated channel beta-3 from Canis lupus familiaris (Dog).